Here is a 568-residue protein sequence, read N- to C-terminus: Urease subunit alpha (568 aa).

A Urease domain is found at 131-568 (GGMDAHIHFI…LPLAQRYFLY (438 aa)). Residues His-136, His-138, and Lys-219 each coordinate Ni(2+). The residue at position 219 (Lys-219) is an N6-carboxylysine. His-221 lines the substrate pocket. Ni(2+) is bound by residues His-248 and His-274. His-322 serves as the catalytic Proton donor. A Ni(2+)-binding site is contributed by Asp-362.

It belongs to the metallo-dependent hydrolases superfamily. Urease alpha subunit family. As to quaternary structure, heterotrimer of UreA (gamma), UreB (beta) and UreC (alpha) subunits. Three heterotrimers associate to form the active enzyme. The cofactor is Ni cation. In terms of processing, carboxylation allows a single lysine to coordinate two nickel ions.

Its subcellular location is the cytoplasm. It carries out the reaction urea + 2 H2O + H(+) = hydrogencarbonate + 2 NH4(+). It functions in the pathway nitrogen metabolism; urea degradation; CO(2) and NH(3) from urea (urease route): step 1/1. This chain is Urease subunit alpha, found in Cereibacter sphaeroides (strain ATCC 17023 / DSM 158 / JCM 6121 / CCUG 31486 / LMG 2827 / NBRC 12203 / NCIMB 8253 / ATH 2.4.1.) (Rhodobacter sphaeroides).